A 163-amino-acid polypeptide reads, in one-letter code: Crossover junction endodeoxyribonuclease RuvC (163 aa).

Residues Asp9, Glu76, and Asp148 contribute to the active site. Residues Asp9, Glu76, and Asp148 each coordinate Mg(2+).

Belongs to the RuvC family. Homodimer which binds Holliday junction (HJ) DNA. The HJ becomes 2-fold symmetrical on binding to RuvC with unstacked arms; it has a different conformation from HJ DNA in complex with RuvA. In the full resolvosome a probable DNA-RuvA(4)-RuvB(12)-RuvC(2) complex forms which resolves the HJ. It depends on Mg(2+) as a cofactor.

Its subcellular location is the cytoplasm. The enzyme catalyses Endonucleolytic cleavage at a junction such as a reciprocal single-stranded crossover between two homologous DNA duplexes (Holliday junction).. Its function is as follows. The RuvA-RuvB-RuvC complex processes Holliday junction (HJ) DNA during genetic recombination and DNA repair. Endonuclease that resolves HJ intermediates. Cleaves cruciform DNA by making single-stranded nicks across the HJ at symmetrical positions within the homologous arms, yielding a 5'-phosphate and a 3'-hydroxyl group; requires a central core of homology in the junction. The consensus cleavage sequence is 5'-(A/T)TT(C/G)-3'. Cleavage occurs on the 3'-side of the TT dinucleotide at the point of strand exchange. HJ branch migration catalyzed by RuvA-RuvB allows RuvC to scan DNA until it finds its consensus sequence, where it cleaves and resolves the cruciform DNA. The polypeptide is Crossover junction endodeoxyribonuclease RuvC (Nostoc punctiforme (strain ATCC 29133 / PCC 73102)).